Reading from the N-terminus, the 74-residue chain is Kappa-scoloptoxin(03)-Ssm1a (74 aa).

Positions M1–S23 are cleaved as a signal peptide. Intrachain disulfides connect C32–C59, C42–C58, and C45–C68.

Belongs to the scoloptoxin-03 family. Expressed by the venom gland.

Its subcellular location is the secreted. Functionally, this toxin inhibits voltage-gated potassium channel currents in DRG neurons (IC(50)=44.2 nM). In vivo, insects injected with this toxin showed signs of neurotoxicity including twitching, paralysis, and body contraction. The chain is Kappa-scoloptoxin(03)-Ssm1a from Scolopendra mutilans (Chinese red-headed centipede).